We begin with the raw amino-acid sequence, 404 residues long: Imidazolonepropionase (404 aa).

Fe(3+) is bound by residues H70 and H72. Zn(2+)-binding residues include H70 and H72. The 4-imidazolone-5-propanoate site is built by R79, Y142, and H174. Y142 is a binding site for N-formimidoyl-L-glutamate. H234 provides a ligand contact to Fe(3+). Residue H234 coordinates Zn(2+). 4-imidazolone-5-propanoate is bound at residue E237. D308 is a Fe(3+) binding site. D308 provides a ligand contact to Zn(2+).

Belongs to the metallo-dependent hydrolases superfamily. HutI family. Zn(2+) serves as cofactor. It depends on Fe(3+) as a cofactor.

It is found in the cytoplasm. It carries out the reaction 4-imidazolone-5-propanoate + H2O = N-formimidoyl-L-glutamate. It participates in amino-acid degradation; L-histidine degradation into L-glutamate; N-formimidoyl-L-glutamate from L-histidine: step 3/3. Its function is as follows. Catalyzes the hydrolytic cleavage of the carbon-nitrogen bond in imidazolone-5-propanoate to yield N-formimidoyl-L-glutamate. It is the third step in the universal histidine degradation pathway. This Thermoplasma volcanium (strain ATCC 51530 / DSM 4299 / JCM 9571 / NBRC 15438 / GSS1) protein is Imidazolonepropionase.